We begin with the raw amino-acid sequence, 94 residues long: 2S albumin-like cysteine protease inhibitor (94 aa).

Disulfide bonds link Cys12–Cys35, Cys36–Cys82, and Cys48–Cys89.

Belongs to the 2S seed storage albumins family. As to expression, expressed in seeds (at protein level).

Its function is as follows. Cysteine protease inhibitor that likely functions in defense against insects by inhibiting cysteine proteases in the midgut of herbivore insects such as C.maculatus. Selectively inhibits cathepsin L, as well as papain, ficin and bromelain with lower efficiency. Shows antitumor activity, inhibiting the growth of prostate cancer cell lines PC3 and DU145, and the gastric cancer cell line Hs746T. No activity against cathepsin B or serine proteases (trypsin, human plasma kallikrein and elastase). This is 2S albumin-like cysteine protease inhibitor from Araucaria angustifolia (Brazilian pine tree).